A 102-amino-acid polypeptide reads, in one-letter code: Turripeptide OL55-like (102 aa).

In terms of processing, contains 8 disulfide bonds. In terms of tissue distribution, expressed by the venom duct.

It localises to the secreted. Functionally, acts as a neurotoxin by inhibiting an ion channel. The sequence is that of Turripeptide OL55-like from Lophiotoma acuta (Marbled turris).